Here is a 208-residue protein sequence, read N- to C-terminus: Mediator of RNA polymerase II transcription subunit 18 (208 aa).

The protein belongs to the Mediator complex subunit 18 family. As to quaternary structure, component of the Mediator complex.

Its subcellular location is the nucleus. Functionally, component of the Mediator complex, a coactivator involved in the regulated transcription of nearly all RNA polymerase II-dependent genes. Mediator functions as a bridge to convey information from gene-specific regulatory proteins to the basal RNA polymerase II transcription machinery. Mediator is recruited to promoters by direct interactions with regulatory proteins and serves as a scaffold for the assembly of a functional preinitiation complex with RNA polymerase II and the general transcription factors. This is Mediator of RNA polymerase II transcription subunit 18 (med18) from Xenopus tropicalis (Western clawed frog).